A 608-amino-acid polypeptide reads, in one-letter code: Actin-related protein 8 (608 aa).

The interval 1–20 (MQRSRASSTSSGRLQASQQV) is disordered. Position 272-275 (272-275 (DIGA)) interacts with ATP.

It belongs to the actin family. ARP8 subfamily. Component of the chromatin remodeling Ino80 complex. Exists as monomers and dimers, but the dimer is most probably the biologically relevant form required for stable interactions with histones that exploits the twofold symmetry of the nucleosome core.

The protein localises to the nucleus. Functionally, plays an important role in the functional organization of mitotic chromosomes. Exhibits low basal ATPase activity, and unable to polymerize. Its function is as follows. Proposed core component of the chromatin remodeling INO80 complex which is involved in transcriptional regulation, DNA replication and probably DNA repair. Strongly prefer nucleosomes and H3-H4 tetramers over H2A-H2B dimers, suggesting it may act as a nucleosome recognition module within the complex. The sequence is that of Actin-related protein 8 from Drosophila pseudoobscura pseudoobscura (Fruit fly).